Reading from the N-terminus, the 167-residue chain is uncharacterized protein (167 aa).

4 helical membrane passes run leucine 13–isoleucine 33, valine 37–tyrosine 57, tryptophan 61–glutamate 81, and leucine 103–serine 123.

It localises to the cell membrane. This is an uncharacterized protein from Haemophilus influenzae (strain ATCC 51907 / DSM 11121 / KW20 / Rd).